The chain runs to 1140 residues: MKTHKKKKSLGGLFSHSSSSPNLKSFLTEEVIHEQQQQQQQHNNNNNNNNNHQRQPSTTSTSSYIDSASSSIEETSGYLSKTSSSSSLPSSPLHNQNQNQNGNIQLNSSSGSLNNNEQQQQQQSISQTSSPNTSSPIMGKKKPSRLAQAFKRVKNNGNNKLKKEIEELTNKTGLNQQYTHSNLPFNVVESDIDNGSSGGTTSSTGNIISHSKSPSSSSSSSSSKKHQRKSRFIEPISQSTEDYTDIPRIIKMSVEYLFEKCLLVPGIFRESANAMELQRLSQLFEKGGDIDLSEYTDPHCIGGLLKLYFREKPIPIFPYDLHKRIYSVLNEEDSNIKVKSLLESGLGKGQFLILRYLFELLNAVSINCNVNFMNYQNLAICFAPSLIQSFDLSCYDVIERLIENYHSIFGVVVPVVDNSSNVSSSSLAHPIIGGKSETNVSLNNLTVTILDHGDINNNSNSSNNNNSSSSSSPYKKSPKPSPKSSPKLNNRNSISPKLSSSTSFRKSINLSSNSIMISDEVQQEQQNQQQQQDEQQDEQQDEQQDEQQDEQNSNSTSINTSSSSITRPRKGSTVQYLNRINTCRRPSSWTNNNRIKQQQHHHHHHQQQQQHQQHQQQQSSSSESNSSLTSSPQKRLNSVNGLESYEEGKNVNEIYSSLKEESSKLPKKSSLNRQMTIVNSNNIGNGDEKNSDCTTSDEDEELKISKPIIRSTSVNEILKETNDDNNNNDQINNSNSSNNIPKTTITTTTNNTTTTNNISPIVKSKSQIITSSAKVTPTPTPAPMQTSSFLSTKQTNSPSSSSSPSSTVSSTSSSPSSSLSSSIDNKTMSNVNYNRFQPANRTVSSPNVRNFSVPTTTTTTSIGSNSFVSPRFIGKRTTPSIFSPRKQSICKPKNTTSSLSSSSSNISKSTNSTPTPTPAPILTSTLSVNSTSSSSKLQEKALPTKTTFITQTSSPLLLPQPLTSTSTSTSTSTSTSTSTSTSTSTTIPTPTPTTSSFKSNSFSTSNDNSNNNNNNNNNNNNNNNNNNNNNNNNNNVTSPTIVSSPSSPTSPISPTSSTFIKGHSHSNSLSQTPSSSSSSLGNRLTAPGRQLNHTNSTSSLISKFNQIDTPSGINQGWKGGVVVQKKQDPVKKSLAIFEKE.

Disordered regions lie at residues 1 to 145 (MKTH…KPSR), 189 to 236 (ESDI…IEPI), 455 to 504 (INNN…STSF), 520 to 644 (EVQQ…GLES), 661 to 700 (ESSKLPKKSSLNRQMTIVNSNNIGNGDEKNSDCTTSDEDE), 720 to 759 (ETNDDNNNNDQINNSNSSNNIPKTTITTTTNNTTTTNNIS), 773 to 927 (AKVT…STLS), and 952 to 1095 (TSSP…NHTN). Low complexity-rich tracts occupy residues 10-26 (LGGLFSHSSSSPNLKSF) and 35-71 (QQQQQQQHNNNNNNNNNHQRQPSTTSTSSYIDSASSS). Positions 28-55 (TEEVIHEQQQQQQQHNNNNNNNNNHQRQ) form a coiled coil. Residues 72–82 (IEETSGYLSKT) are compositionally biased toward polar residues. Low complexity-rich tracts occupy residues 83-136 (SSSS…TSSP) and 193-222 (DNGSSGGTTSSTGNIISHSKSPSSSSSSSS). The region spanning 234-409 (EPISQSTEDY…RLIENYHSIF (176 aa)) is the Rho-GAP domain. Composition is skewed to low complexity over residues 456-475 (NNNSNSSNNNNSSSSSSPYK) and 482-493 (PKSSPKLNNRNS). Positions 494–504 (ISPKLSSSTSF) are enriched in polar residues. A coiled-coil region spans residues 517-548 (ISDEVQQEQQNQQQQQDEQQDEQQDEQQDEQQ). Residues 520 to 533 (EVQQEQQNQQQQQD) show a composition bias toward low complexity. Acidic residues predominate over residues 534–549 (EQQDEQQDEQQDEQQD). Residues 550 to 566 (EQNSNSTSINTSSSSIT) show a composition bias toward low complexity. Polar residues predominate over residues 572–596 (STVQYLNRINTCRRPSSWTNNNRIK). Positions 597-606 (QQQHHHHHHQ) are enriched in basic residues. A compositionally biased stretch (low complexity) spans 607-631 (QQQQHQQHQQQQSSSSESNSSLTSS). 2 stretches are compositionally biased toward polar residues: residues 632 to 641 (PQKRLNSVNG) and 672 to 684 (NRQMTIVNSNNIG). Residues 724 to 759 (DNNNNDQINNSNSSNNIPKTTITTTTNNTTTTNNIS) show a composition bias toward low complexity. The span at 773-796 (AKVTPTPTPAPMQTSSFLSTKQTN) shows a compositional bias: polar residues. Residues 797 to 822 (SPSSSSSPSSTVSSTSSSPSSSLSSS) are compositionally biased toward low complexity. A compositionally biased stretch (polar residues) spans 823–854 (IDNKTMSNVNYNRFQPANRTVSSPNVRNFSVP). Low complexity-rich tracts occupy residues 891–914 (KPKNTTSSLSSSSSNISKSTNSTP), 952–1058 (TSSP…TSST), and 1065–1079 (HSNSLSQTPSSSSSS).

It localises to the cytoplasm. Functionally, rho GTPase-activating protein involved in the signal transduction pathway. In Dictyostelium discoideum (Social amoeba), this protein is Rho GTPase-activating protein gacF (gacF).